Here is a 153-residue protein sequence, read N- to C-terminus: Putative nuclear shuttle protein (153 aa).

It belongs to the nanoviridae nuclear shuttle protein family.

It is found in the host nucleus. The protein localises to the host cytoplasm. Its function is as follows. Putative nuclear shuttle protein. This is Putative nuclear shuttle protein (DNA-N) from Cicer arietinum (Chickpea).